Consider the following 276-residue polypeptide: Large ribosomal subunit protein uL2 (276 aa).

The disordered stretch occupies residues 221–276 (RGSAMNPNDHPHGGGEGRAPIGRKSPMTPWGKKARGIKTRDRKKSSNELIIRRRTK). Over residues 252-263 (KKARGIKTRDRK) the composition is skewed to basic residues.

Belongs to the universal ribosomal protein uL2 family. Part of the 50S ribosomal subunit. Forms a bridge to the 30S subunit in the 70S ribosome.

One of the primary rRNA binding proteins. Required for association of the 30S and 50S subunits to form the 70S ribosome, for tRNA binding and peptide bond formation. It has been suggested to have peptidyltransferase activity; this is somewhat controversial. Makes several contacts with the 16S rRNA in the 70S ribosome. This is Large ribosomal subunit protein uL2 from Phytoplasma australiense.